The following is a 299-amino-acid chain: Probable alpha-L-glutamate ligase (299 aa).

In terms of domain architecture, ATP-grasp spans 111 to 293 (LQALAAANIA…VATQMIAYLE (183 aa)). Residues K147, 184-185 (DF), D193, and 217-219 (RAN) each bind ATP. Positions 254, 266, and 268 each coordinate Mg(2+). Positions 254, 266, and 268 each coordinate Mn(2+).

The protein belongs to the RimK family. Requires Mg(2+) as cofactor. Mn(2+) is required as a cofactor.

The chain is Probable alpha-L-glutamate ligase from Mannheimia succiniciproducens (strain KCTC 0769BP / MBEL55E).